The sequence spans 173 residues: Probable calcium-binding protein CML14 (173 aa).

4 consecutive EF-hand domains span residues 21-56, 57-92, 97-132, and 133-168; these read SQLK…LGLR, PTGD…VLTT, VDQA…LGQP, and LTFE…SALD. The Ca(2+) site is built by Asp34, Asn36, Asp38, Ser40, Glu45, Asp70, Asn72, Asn74, Ser76, Glu81, Asp110, Asp112, Asn114, Glu121, Asp146, Asp148, Asp150, and Glu157.

Potential calcium sensor. This Oryza sativa subsp. japonica (Rice) protein is Probable calcium-binding protein CML14 (CML14).